The primary structure comprises 293 residues: Ribosomal protein L11 methyltransferase (293 aa).

Positions 145, 166, 188, and 230 each coordinate S-adenosyl-L-methionine.

It belongs to the methyltransferase superfamily. PrmA family.

It is found in the cytoplasm. It carries out the reaction L-lysyl-[protein] + 3 S-adenosyl-L-methionine = N(6),N(6),N(6)-trimethyl-L-lysyl-[protein] + 3 S-adenosyl-L-homocysteine + 3 H(+). Functionally, methylates ribosomal protein L11. This Actinobacillus pleuropneumoniae serotype 3 (strain JL03) protein is Ribosomal protein L11 methyltransferase.